Consider the following 244-residue polypeptide: Glutathione-independent glyoxalase hsp3101 (244 aa).

Catalysis depends on residues Cys-139, His-140, and Glu-173.

It belongs to the peptidase C56 family. HSP31-like subfamily.

The protein localises to the cytoplasm. It is found in the nucleus. The catalysed reaction is methylglyoxal + H2O = (R)-lactate + H(+). Its function is as follows. Catalyzes the conversion of methylglyoxal (MG) to D-lactate in a single glutathione (GSH)-independent step. May play a role in detoxifying endogenously produced glyoxals. Involved in protection against reactive oxygen species (ROS). In Schizosaccharomyces pombe (strain 972 / ATCC 24843) (Fission yeast), this protein is Glutathione-independent glyoxalase hsp3101.